Consider the following 137-residue polypeptide: MFSELRILRDILLLCFLSVGINAKSSHIEDLDFTDHTNGSPKISRSSYFKQDFRLGYKLKLFCESSGNPRPQIVWYHRGVEVNPDHNRTIRFSIHGDTVSSHLEVDPTSIGDKGEYECVATNLKGSRVKKFLTDYQY.

Residues 1-23 (MFSELRILRDILLLCFLSVGINA) form the signal peptide. The region spanning 41-133 (PKISRSSYFK…KGSRVKKFLT (93 aa)) is the Ig-like C2-type domain. Cys-63 and Cys-118 are oxidised to a cystine.

Expressed in DD and VD GABAergic motor neurons. Expressed in a subset of head neurons including M2 motor neurons in the pharynx. Expressed in coelomocytes.

It localises to the membrane. Its subcellular location is the secreted. The protein localises to the extracellular space. The protein resides in the cell projection. It is found in the dendrite. It localises to the axon. Plays a role in neural development, where it temporally regulates synapse formation in the D-type inhibitory GABAergic motor neurons, dorsal D (DD) and ventral D (VD) motor neurons. Controls the translocation of postsynaptic proteins, such as the acetylcholine receptor subunit acr-12, and presynaptic proteins, such as snb-1, along nerve cords to prevent premature synapse remodeling/formation. The sequence is that of Immunoglobulin domain-containing protein oig-1 from Caenorhabditis elegans.